The following is a 344-amino-acid chain: Holliday junction branch migration complex subunit RuvB (344 aa).

Residues 1–182 (MRIEALNTAP…FGINSRLDYY (182 aa)) form a large ATPase domain (RuvB-L) region. ATP is bound by residues Ile21, Arg22, Gly63, Lys66, Thr67, Thr68, 129 to 131 (EDY), Arg172, Tyr182, and Arg219. Thr67 contacts Mg(2+). The tract at residues 183–253 (NPELLQSIII…VARRTLESLE (71 aa)) is small ATPAse domain (RuvB-S). A head domain (RuvB-H) region spans residues 256–344 (EGGLDDMDKK…GSLFDTAEDG (89 aa)). DNA is bound by residues Arg311 and Arg316.

It belongs to the RuvB family. In terms of assembly, homohexamer. Forms an RuvA(8)-RuvB(12)-Holliday junction (HJ) complex. HJ DNA is sandwiched between 2 RuvA tetramers; dsDNA enters through RuvA and exits via RuvB. An RuvB hexamer assembles on each DNA strand where it exits the tetramer. Each RuvB hexamer is contacted by two RuvA subunits (via domain III) on 2 adjacent RuvB subunits; this complex drives branch migration. In the full resolvosome a probable DNA-RuvA(4)-RuvB(12)-RuvC(2) complex forms which resolves the HJ.

Its subcellular location is the cytoplasm. It carries out the reaction ATP + H2O = ADP + phosphate + H(+). In terms of biological role, the RuvA-RuvB-RuvC complex processes Holliday junction (HJ) DNA during genetic recombination and DNA repair, while the RuvA-RuvB complex plays an important role in the rescue of blocked DNA replication forks via replication fork reversal (RFR). RuvA specifically binds to HJ cruciform DNA, conferring on it an open structure. The RuvB hexamer acts as an ATP-dependent pump, pulling dsDNA into and through the RuvAB complex. RuvB forms 2 homohexamers on either side of HJ DNA bound by 1 or 2 RuvA tetramers; 4 subunits per hexamer contact DNA at a time. Coordinated motions by a converter formed by DNA-disengaged RuvB subunits stimulates ATP hydrolysis and nucleotide exchange. Immobilization of the converter enables RuvB to convert the ATP-contained energy into a lever motion, pulling 2 nucleotides of DNA out of the RuvA tetramer per ATP hydrolyzed, thus driving DNA branch migration. The RuvB motors rotate together with the DNA substrate, which together with the progressing nucleotide cycle form the mechanistic basis for DNA recombination by continuous HJ branch migration. Branch migration allows RuvC to scan DNA until it finds its consensus sequence, where it cleaves and resolves cruciform DNA. This Chlorobaculum tepidum (strain ATCC 49652 / DSM 12025 / NBRC 103806 / TLS) (Chlorobium tepidum) protein is Holliday junction branch migration complex subunit RuvB.